A 446-amino-acid chain; its full sequence is Packaging protein 1 (446 aa).

Over residues Met-1 to Phe-10 the composition is skewed to basic residues. Positions Met-1–Leu-74 are disordered. An ATP-binding site is contributed by Gly-170–Ser-177. Positions Arg-439 to Lys-446 are DNA-binding.

This sequence belongs to the adenoviridae packaging protein 1 family. In terms of assembly, homodimer. Part of a genome packaging complex composed of packaging proteins 1, 2 and 3; this complex specifically binds to the packaging sequence on the left end of viral genomic DNA and performs packaging of the viral genome. Interacts with protein 33K.

The protein localises to the virion. The protein resides in the host nucleus. It localises to the host nucleoplasm. It is found in the host nucleolus. Component of the packaging machinery which encapsidates the viral DNA into preformed capsids and transcriptional activator of the viral major late promoter (MLP). Binds, along with packaging proteins 2 and 3, to the specific packaging sequence on the left end of viral genomic DNA and displays ATPase activity thereby providing the power stroke of the packaging machinery. The activity of packaging protein IVa2 is stimulated by protein 33K which acts as a terminase. May be the protein that pumps DNA into the capsid powered by ATP hydrolysis. Specifically binds to the 5'-CG-3' nucleotides of the repeats making up the packaging sequence. Component of the DEF-A and DEF-B transcription factors that bind downstream elements of the major late promoter (MLP), and stimulate transcription from the MLP after initiation of viral DNA replication. DEF-A is a heterodimer packaging proteins 1 and 2 and DEF-B is a homodimer of packaging protein 1. This chain is Packaging protein 1, found in Human adenovirus F serotype 40 (HAdV-40).